Consider the following 424-residue polypeptide: Histidine--tRNA ligase (424 aa).

This sequence belongs to the class-II aminoacyl-tRNA synthetase family. Homodimer.

The protein resides in the cytoplasm. The catalysed reaction is tRNA(His) + L-histidine + ATP = L-histidyl-tRNA(His) + AMP + diphosphate + H(+). This is Histidine--tRNA ligase from Yersinia pestis bv. Antiqua (strain Antiqua).